The following is a 303-amino-acid chain: Probable phytol kinase, chloroplastic (303 aa).

A chloroplast-targeting transit peptide spans 1–49; it reads MAAAAAWTGAASPNSLLLSRSPPHAAALAPSPGSSMRRRLLLGVGTPAV. 6 helical membrane passes run 98 to 118, 122 to 144, 168 to 188, 227 to 247, 254 to 274, and 276 to 296; these read VVHV…SNST, YFAA…RLYT, YVLV…IGIV, FISG…LGYI, ALGK…VPVT, and VVDD…LLFS.

Belongs to the polyprenol kinase family.

The protein localises to the plastid. Its subcellular location is the chloroplast membrane. It catalyses the reaction phytol + CTP = phytyl phosphate + CDP + H(+). It functions in the pathway cofactor biosynthesis; tocopherol biosynthesis. Its function is as follows. Involved in the activation and reutilization of phytol from chlorophyll degradation in plant metabolism, including tocopherol biosynthesis. Catalyzes the conversion of phytol to phytol monophosphate (PMP). The chain is Probable phytol kinase, chloroplastic from Zea mays (Maize).